A 114-amino-acid polypeptide reads, in one-letter code: MSSLSAQKCEACHADAPKVSDEELAQLITKIPDWVPEVRDGIMQLERVYKFKNFKQAIAFTNKVGDMAEDEGHHPGLLTEWGKVTVTWWSHSIKGLHKNDFICAAKTDDVFNAL.

This sequence belongs to the pterin-4-alpha-carbinolamine dehydratase family.

It catalyses the reaction (4aS,6R)-4a-hydroxy-L-erythro-5,6,7,8-tetrahydrobiopterin = (6R)-L-erythro-6,7-dihydrobiopterin + H2O. The polypeptide is Putative pterin-4-alpha-carbinolamine dehydratase (Pseudoalteromonas translucida (strain TAC 125)).